Here is a 306-residue protein sequence, read N- to C-terminus: Oligopeptide transport system permease protein OppB (306 aa).

Over 1 to 11 (MLKFILRRCLE) the chain is Cytoplasmic. Residues 12–32 (AIPTLFILITISFFMMRLAPG) form a helical membrane-spanning segment. Residues 33-99 (SPFTGERTLP…VASSFPVSAK (67 aa)) lie on the Periplasmic side of the membrane. The 200-residue stretch at 94 to 293 (FPVSAKLGAA…ALTILFNAIV (200 aa)) folds into the ABC transmembrane type-1 domain. A helical membrane pass occupies residues 100–120 (LGAAAFFLAVILGVSAGVIAA). The Cytoplasmic segment spans residues 121–137 (LKQNTKWDYTVMGLAMT). The chain crosses the membrane as a helical span at residues 138 to 158 (GVVIPSFVVAPLLVMIFAIIL). At 159-169 (HWLPGGGWNGG) the chain is on the periplasmic side. A helical transmembrane segment spans residues 170–190 (ALKFMILPMVALSLAYIASIA). The Cytoplasmic segment spans residues 191–229 (RITRGSMIEVLHSNFIRTARAKGLPMRRIILRHALKPAL). A helical membrane pass occupies residues 230-250 (LPVLSYMGPAFVGIITGSMVI). Topologically, residues 251-279 (ETIYGLPGIGQLFVNGALNRDYSLVLSLT) are periplasmic. Residues 280–300 (ILVGALTILFNAIVDVLYAVI) form a helical membrane-spanning segment. Over 301–306 (DPKIRY) the chain is Cytoplasmic.

It belongs to the binding-protein-dependent transport system permease family. OppBC subfamily. In terms of assembly, the complex is composed of two ATP-binding proteins (OppD and OppF), two transmembrane proteins (OppB and OppC) and a solute-binding protein (OppA).

It localises to the cell inner membrane. Functionally, part of the ABC transporter complex OppABCDF involved in the uptake of oligopeptides. Probably responsible for the translocation of the substrate across the membrane. This Shigella flexneri protein is Oligopeptide transport system permease protein OppB (oppB).